The sequence spans 101 residues: Ubiquitin-related modifier 1 homolog (101 aa).

Glycine 101 bears the 1-thioglycine mark. A Glycyl lysine isopeptide (Gly-Lys) (interchain with K-? in acceptor proteins) cross-link involves residue glycine 101.

It belongs to the URM1 family. As to quaternary structure, interacts with cer. In terms of processing, C-terminal thiocarboxylation occurs in 2 steps, it is first acyl-adenylated (-COAMP) via the hesA/moeB/thiF part of the MOCS3 homolog, then thiocarboxylated (-COSH) via the rhodanese domain of the MOCS3 homolog.

Its subcellular location is the cytoplasm. Its pathway is tRNA modification; 5-methoxycarbonylmethyl-2-thiouridine-tRNA biosynthesis. In terms of biological role, acts as a sulfur carrier required for 2-thiolation of mcm(5)S(2)U at tRNA wobble positions of cytosolic tRNA(Lys), tRNA(Glu) and tRNA(Gln). Serves as sulfur donor in tRNA 2-thiolation reaction by being thiocarboxylated (-COSH) at its C-terminus by MOCS3. The sulfur is then transferred to tRNA to form 2-thiolation of mcm(5)S(2)U. Also acts as a ubiquitin-like protein (UBL) that is covalently conjugated via an isopeptide bond to lysine residues of target proteins such as Prx2/Jafrac1, Ciao1, Eip71CD and GILT1. The thiocarboxylated form serves as substrate for conjugation and oxidative stress specifically induces the formation of UBL-protein conjugates. The protein is Ubiquitin-related modifier 1 homolog of Drosophila ananassae (Fruit fly).